The chain runs to 997 residues: MAGNDTCNNSCDVKTARLWRDAALRSRKLRSSLRQLTLSCVDKRKLILPADLGDVEVLNLGNNSLEEVPDGLQSLSAGNLHVLILRRNKFLNVPTAVYHLGRLTELDISYNRLSCLTEAVGLLGKLKKLCLSHNQLRTLPRQLGMLVDLEELDVSFNQITHLPDTMQGLPSLRTLDLDHNELCSFPQQLFHVPALEELDFSGNKMLGSLPEGIRSMQSLKILWLSSTSLCLLPDSICELVNLESLMLDNNNLHTLPEGFGALQKLKMLNVSSNAFQDFPVPLLQLVDLEELYMSRNRLVVLPEVISCMTKLVTLWLDNNRIRYLPDSIVELSFLEELVLQGNQIAILPDDFGKLSKVNIWKIKDNPLIQPPYEVCMKGISYIAAYQKELAHSQPAVKPRLKLVLLGLKDAGKTLLRQCLTDEQNTSTLVQGYKGIEITNWTADAERGLAFIVYDLAGDQSYDIIKPFFFSPGALYILVVNLKSYVCKHFYTHVGYFIHLITSKVPHAVVCIVGTHIDLCNEKELEEKCLDIHHQIAVQEKRDSETLQTLIQTVDKALSQDFDFRASNPHSAFYGVSDKNLRRKKTHFQYLMNSRLQILSPVLCVSCLDFSNIKRLREKLLSVAEHREIFPNLHRVLPKSWQMLEELHFKPQELWLTWWDSARLGLQAGLTEDRMQSALSFLHESGKLLYFEDNQTLKEYVFHNLTKLIDILNVFFQRDASVLFAKLTSDATADETKVTQFHHYVEGFLLHGLLPTHIIRSLLKPHIKTHQDLQLILELLEKMGLCYCINKPKNKLLNGATVWYKFPCYVKNEAPHAEAWINGTNISEPCLAVEQLQIEYSFPFIFPPGLFARFSVQINSHIVHRSDSKFQIFAYRGKVPVVVSFQPARGALQPGILSIASHASLPNIWTAWQAITPLVEELNALLQEWPSLYYTVHVLCSKCLKRGSPNPHPFPGELLSQPRPDGVTELICPKNGSERLNVSLVYPPTPTMISPCSK.

14 LRR repeats span residues 32 to 53, 54 to 76, 79 to 100, 102 to 123, 125 to 146, 148 to 170, 171 to 192, 194 to 216, 218 to 239, 241 to 262, 264 to 286, 287 to 308, 310 to 331, and 333 to 354; these read SLRQ…ADLG, DVEV…QSLS, NLHV…VYHL, RLTE…VGLL, KLKK…LGML, DLEE…QGLP, SLRT…LFHV, ALEE…IRSM, SLKI…ICEL, NLES…FGAL, KLKM…LQLV, DLEE…ISCM, KLVT…IVEL, and FLEE…FGKL. In terms of domain architecture, Roc spans 393–626; it reads QPAVKPRLKL…EKLLSVAEHR (234 aa). Residues 637–861 form the COR domain; sequence PKSWQMLEEL…RFSVQINSHI (225 aa).

Its subcellular location is the cytoplasm. Its function is as follows. Probable GTP-binding protein. Functions in innate immunity and more specifically the inflammatory response as a regulator of the Toll-like receptor TLR2 and TLR4 signaling pathways. The chain is Malignant fibrous histiocytoma-amplified sequence 1 homolog (mfhas1) from Xenopus tropicalis (Western clawed frog).